Reading from the N-terminus, the 287-residue chain is Neuferricin homolog (287 aa).

Residues M1 to G22 form the signal peptide. In terms of domain architecture, Cytochrome b5 heme-binding spans G61–G146. Residues Y175–N204 are a coiled coil.

The protein belongs to the cytochrome b5 family. MAPR subfamily.

The protein resides in the secreted. In terms of biological role, heme-binding protein. This chain is Neuferricin homolog, found in Drosophila melanogaster (Fruit fly).